A 316-amino-acid chain; its full sequence is Probable cell division protein WhiA (316 aa).

Positions Ser-276–Lys-309 form a DNA-binding region, H-T-H motif.

The protein belongs to the WhiA family.

Functionally, involved in cell division and chromosome segregation. The chain is Probable cell division protein WhiA from Bifidobacterium longum subsp. infantis (strain ATCC 15697 / DSM 20088 / JCM 1222 / NCTC 11817 / S12).